A 590-amino-acid chain; its full sequence is Aspartate--tRNA(Asp/Asn) ligase (590 aa).

E175 is an L-aspartate binding site. The interval 199-202 (QQYK) is aspartate. Residues R221 and H450 each contribute to the L-aspartate site. 221–223 (RDE) serves as a coordination point for ATP. E484 serves as a coordination point for ATP. L-aspartate is bound at residue R491. Residue 536-539 (GVDR) participates in ATP binding.

This sequence belongs to the class-II aminoacyl-tRNA synthetase family. Type 1 subfamily. As to quaternary structure, homodimer.

Its subcellular location is the cytoplasm. It catalyses the reaction tRNA(Asx) + L-aspartate + ATP = L-aspartyl-tRNA(Asx) + AMP + diphosphate. Its function is as follows. Aspartyl-tRNA synthetase with relaxed tRNA specificity since it is able to aspartylate not only its cognate tRNA(Asp) but also tRNA(Asn). Reaction proceeds in two steps: L-aspartate is first activated by ATP to form Asp-AMP and then transferred to the acceptor end of tRNA(Asp/Asn). This chain is Aspartate--tRNA(Asp/Asn) ligase, found in Bradyrhizobium sp. (strain BTAi1 / ATCC BAA-1182).